The primary structure comprises 446 residues: MPALPILALALAPLLVNGQLSGSVGPLTSAHSKAATKTCNVLDYGAVADNSTDIGSALSEAWDACSDGGLIYIPPGDYAMDTWVSLSGGKATAIILDGTIYRTGTDGGNMILVENSSDFELYSNSSSGAVQGFGYVYHREGDLDGPRILRLQDVSNFAVHDIILVDAPAFHFVMDDCSDGEVYNMAIRGGNSGGLDGIDVWGSNIWVHDVEVTNKDECVTVKGPANNILVESIYCNWSGGCAMGSLGADTDITDILYRNVYTWSSNQMYMIKSNGGSGTVNNTLLENFIGRGNRYSLDVDSYWSSMTAVDGDGVQLSNITFKNWKGTEADGAERGPIKVVCSDTAPCTDITIEDFAMWTESGDEQTYTCESAYGDGFCLEDSDSTTSYTTTQTVTTAPSGYSATTMAADLTTDFGTTASIPIPTIPTSFYPGLTAISPLASAATTA.

A signal peptide spans Met-1 to Gly-18. Cys-39 and Cys-65 form a disulfide bridge. Residues Asn-50, Asn-115, and Asn-124 are each glycosylated (N-linked (GlcNAc...) asparagine). The Proton donor role is filled by Asp-216. The cysteines at positions 218 and 235 are disulfide-linked. Asn-236, Asn-281, and Asn-318 each carry an N-linked (GlcNAc...) asparagine glycan. 2 disulfides stabilise this stretch: Cys-341/Cys-347 and Cys-369/Cys-378.

The protein belongs to the glycosyl hydrolase 28 family.

The protein resides in the secreted. It catalyses the reaction Endohydrolysis of alpha-D-GalA-(1-&gt;2)-alpha-L-Rha glycosidic bond in the rhamnogalacturonan I backbone with initial inversion of anomeric configuration releasing oligosaccharides with beta-D-GalA at the reducing end.. Its function is as follows. Pectinolytic enzymes consist of four classes of enzymes: pectine lyase, polygalacturonase, pectin methylesterase and rhamnogalacturonase. Hydrolyzes alpha-D-galacturonopyranosyl-(1,2)-alpha-L-rhamnopyranosyl linkages in the backbone of the hairy regions of pectins. This chain is Rhamnogalacturonase A (rhgA), found in Aspergillus niger.